We begin with the raw amino-acid sequence, 237 residues long: Neural retina-specific leucine zipper protein (237 aa).

Residues lysine 20 and lysine 24 each participate in a glycyl lysine isopeptide (Lys-Gly) (interchain with G-Cter in SUMO) cross-link. The disordered stretch occupies residues 23–57 (VKREPSEGRPGPPTASLGSTPYSSVPPSPTFSEPG). A minimal transactivation domain (MTD) region spans residues 30–93 (GRPGPPTASL…AGEALGLSPE (64 aa)). Residues 159-185 (RLKQRRRTLKNRGYAQACRSKRLQQRR) form a basic motif region. One can recognise a bZIP domain in the interval 159 to 222 (RLKQRRRTLK…DLYKARCDRL (64 aa)). Positions 187–208 (LEAERARLAAQLDALRAEVARL) are leucine-zipper.

This sequence belongs to the bZIP family. As to quaternary structure, interacts with FIZ1; this interaction represses transactivation. Interacts (via the leucine-zipper domain) with CRX. In terms of processing, phosphorylated. Disumoylated at Lys-20. Sumoylation modulates the transcriptional activity of NRL on RHO and NR2E3 promoters, and is required for normal rod differentiation. As to expression, expressed in the brain and the retina. Expressed strongly in rod and cone cells (at protein level).

The protein localises to the cytoplasm. It localises to the nucleus. In terms of biological role, acts as a transcriptional activator which regulates the expression of several rod-specific genes, including RHO and PDE6B. Also functions as a transcriptional coactivator, stimulating transcription mediated by the transcription factor CRX and NR2E3. Binds to the rhodopsin promoter in a sequence-specific manner. In Homo sapiens (Human), this protein is Neural retina-specific leucine zipper protein (NRL).